A 239-amino-acid polypeptide reads, in one-letter code: 7-cyano-7-deazaguanine synthase (239 aa).

13 to 23 (FSGGQDSTTCL) lines the ATP pocket. Cysteine 192, cysteine 201, cysteine 204, and cysteine 207 together coordinate Zn(2+).

The protein belongs to the QueC family. The cofactor is Zn(2+).

It carries out the reaction 7-carboxy-7-deazaguanine + NH4(+) + ATP = 7-cyano-7-deazaguanine + ADP + phosphate + H2O + H(+). It functions in the pathway purine metabolism; 7-cyano-7-deazaguanine biosynthesis. Catalyzes the ATP-dependent conversion of 7-carboxy-7-deazaguanine (CDG) to 7-cyano-7-deazaguanine (preQ(0)). In Shewanella sp. (strain MR-7), this protein is 7-cyano-7-deazaguanine synthase.